We begin with the raw amino-acid sequence, 333 residues long: L-lactate dehydrogenase B chain (333 aa).

Residues 29 to 57 (GQVGMACAISVLEKGLCDELALVDVLEDK) and R99 contribute to the NAD(+) site. Substrate-binding residues include R106, N138, and R169. N138 provides a ligand contact to NAD(+). H193 serves as the catalytic Proton acceptor. T248 contacts substrate.

This sequence belongs to the LDH/MDH superfamily. LDH family. As to quaternary structure, homotetramer.

It localises to the cytoplasm. It carries out the reaction (S)-lactate + NAD(+) = pyruvate + NADH + H(+). It participates in fermentation; pyruvate fermentation to lactate; (S)-lactate from pyruvate: step 1/1. In terms of biological role, interconverts simultaneously and stereospecifically pyruvate and lactate with concomitant interconversion of NADH and NAD(+). This is L-lactate dehydrogenase B chain (LDHB) from Sceloporus woodi (Florida scrub lizard).